The sequence spans 445 residues: Tubulin beta chain (445 aa).

The GTP site is built by glutamine 11, glutamate 69, serine 138, glycine 142, threonine 143, glycine 144, asparagine 204, and asparagine 226. Glutamate 69 contributes to the Mg(2+) binding site.

This sequence belongs to the tubulin family. Dimer of alpha and beta chains. A typical microtubule is a hollow water-filled tube with an outer diameter of 25 nm and an inner diameter of 15 nM. Alpha-beta heterodimers associate head-to-tail to form protofilaments running lengthwise along the microtubule wall with the beta-tubulin subunit facing the microtubule plus end conferring a structural polarity. Microtubules usually have 13 protofilaments but different protofilament numbers can be found in some organisms and specialized cells. Mg(2+) serves as cofactor.

The protein resides in the cytoplasm. It localises to the cytoskeleton. Functionally, tubulin is the major constituent of microtubules, a cylinder consisting of laterally associated linear protofilaments composed of alpha- and beta-tubulin heterodimers. Microtubules grow by the addition of GTP-tubulin dimers to the microtubule end, where a stabilizing cap forms. Below the cap, tubulin dimers are in GDP-bound state, owing to GTPase activity of alpha-tubulin. The chain is Tubulin beta chain from Leishmania mexicana.